The following is a 110-amino-acid chain: MTELIRIAALFAVTAVAEIVGCYLPWLVLKGGRPVWLLVPAALSLALFAWLLTLHPSAAGRTYAAYGGVYIGVALLWLRVVDGVALTRWDAAGAALALGGMAMIALQPRA.

3 helical membrane passes run 9–29 (ALFA…WLVL), 34–54 (PVWL…LLTL), and 66–86 (YGGV…GVAL).

The protein belongs to the UPF0060 family.

The protein resides in the cell inner membrane. The sequence is that of UPF0060 membrane protein Bcep1808_1236 from Burkholderia vietnamiensis (strain G4 / LMG 22486) (Burkholderia cepacia (strain R1808)).